Here is a 608-residue protein sequence, read N- to C-terminus: Alpha-glycerophosphate oxidase (608 aa).

An FAD-binding site is contributed by 21-49; sequence DLLIIGGGITGAGVALQAAASGLETGLIE. A disordered region spans residues 393–418; sequence SAVSKLESSTSEKHLDPSAVSRGSSL.

This sequence belongs to the FAD-dependent glycerol-3-phosphate dehydrogenase family. It depends on FAD as a cofactor.

The protein localises to the cell membrane. It carries out the reaction sn-glycerol 3-phosphate + O2 = dihydroxyacetone phosphate + H2O2. It participates in membrane lipid metabolism; glycerophospholipid metabolism. The polypeptide is Alpha-glycerophosphate oxidase (glpO) (Streptococcus pneumoniae serotype 4 (strain ATCC BAA-334 / TIGR4)).